Consider the following 129-residue polypeptide: Ribonuclease P protein component (129 aa).

Belongs to the RnpA family. Consists of a catalytic RNA component (M1 or rnpB) and a protein subunit.

It carries out the reaction Endonucleolytic cleavage of RNA, removing 5'-extranucleotides from tRNA precursor.. Its function is as follows. RNaseP catalyzes the removal of the 5'-leader sequence from pre-tRNA to produce the mature 5'-terminus. It can also cleave other RNA substrates such as 4.5S RNA. The protein component plays an auxiliary but essential role in vivo by binding to the 5'-leader sequence and broadening the substrate specificity of the ribozyme. The sequence is that of Ribonuclease P protein component from Prochlorococcus marinus (strain MIT 9515).